Reading from the N-terminus, the 571-residue chain is Potassium-transporting ATPase potassium-binding subunit (571 aa).

The next 12 helical transmembrane spans lie at L5–V25, Y60–L80, V86–V106, G131–I151, I177–S197, P247–T267, L291–A311, F334–V354, G386–G406, A425–L445, A498–A518, and G547–A567.

Belongs to the KdpA family. The system is composed of three essential subunits: KdpA, KdpB and KdpC.

It is found in the cell membrane. Its function is as follows. Part of the high-affinity ATP-driven potassium transport (or Kdp) system, which catalyzes the hydrolysis of ATP coupled with the electrogenic transport of potassium into the cytoplasm. This subunit binds the extracellular potassium ions and delivers the ions to the membrane domain of KdpB through an intramembrane tunnel. This is Potassium-transporting ATPase potassium-binding subunit from Rhodococcus jostii (strain RHA1).